A 1126-amino-acid polypeptide reads, in one-letter code: Replication protein 1a (1126 aa).

The methyltransferase stretch occupies residues 69–406; sequence SFSLDATQQN…HTIIGGVTLI (338 aa). Positions 90 to 278 constitute an Alphavirus-like MT domain; sequence VFSNSSSSSH…HRFSLLKHYL (189 aa). The (+)RNA virus helicase ATP-binding domain occupies 806 to 963; sequence DQSCVFASAE…HKLTGKVERK (158 aa). An ATP-dependent helicase region spans residues 834–1094; the sequence is TIVDGVAGCG…RHKKTFKYFT (261 aa). Residue 838 to 845 coordinates ATP; it reads GVAGCGKT. In terms of domain architecture, (+)RNA virus helicase C-terminal spans 964–1125; the sequence is LITWRSPADA…SILARSYNHN (162 aa).

Belongs to the bromoviridae replication protein 1a family. As to quaternary structure, interacts with RNA-directed RNA polymerase 2a.

It localises to the host endoplasmic reticulum membrane. Functionally, involved in the virus replication. Contains a helicase domain and a methyltransferase domain. The methyltransferase domain is probably involved in viral RNA capping. Involved in the formation of ER membrane spherular invaginations in which RNA replication complexes form. The sequence is that of Replication protein 1a from Alfalfa mosaic virus (AMV).